The following is a 94-amino-acid chain: Surfactant-associated protein 3 (94 aa).

In terms of tissue distribution, found in lung alveolar cells type I and II, as well as alveolar macrophages (at protein level). Detected also in testis and kidney. Expressed by different tissues of the ocular system like cornea, conjuctiva, lacrimal gland, eyelid and efferent tear ducts (at protein level). From these tissues is secreted into the tear film (at protein level).

It is found in the cytoplasm. The protein localises to the secreted. Putative surfactant protein. May be involved in wound healing and in the reduction of the surface tension at the ocular surface. The protein is Surfactant-associated protein 3 (SFTA3) of Homo sapiens (Human).